The primary structure comprises 442 residues: Putative amino acid transporter YuiF (442 aa).

Helical transmembrane passes span 21–41 (IVIA…LGLG), 51–71 (LGGN…AAAL), 103–123 (LIVL…PVHI), 146–166 (LIAC…PVGF), 190–210 (IPYA…LSVI), 236–256 (IGIA…LSQT), 259–279 (VEGM…SGVM), 292–312 (MVLM…SNVL), 335–355 (LGAL…GSSF), 364–384 (IFVP…AIIG), and 421–441 (VPTF…AALV).

The protein localises to the cell membrane. The polypeptide is Putative amino acid transporter YuiF (yuiF) (Bacillus subtilis (strain 168)).